A 411-amino-acid chain; its full sequence is Tyrosine--tRNA ligase (411 aa).

Position 34 (Tyr-34) interacts with L-tyrosine. The 'HIGH' region motif lies at 39–48 (CTATSLHIGS). L-tyrosine is bound by residues Tyr-171 and Gln-175. The 'KMSKS' region signature appears at 231–235 (KMGKT). ATP is bound at residue Lys-234. Positions 345–411 (ISAYELFYEA…GKKRHILVRV (67 aa)) constitute an S4 RNA-binding domain.

It belongs to the class-I aminoacyl-tRNA synthetase family. TyrS type 1 subfamily. In terms of assembly, homodimer.

Its subcellular location is the cytoplasm. The catalysed reaction is tRNA(Tyr) + L-tyrosine + ATP = L-tyrosyl-tRNA(Tyr) + AMP + diphosphate + H(+). Its function is as follows. Catalyzes the attachment of tyrosine to tRNA(Tyr) in a two-step reaction: tyrosine is first activated by ATP to form Tyr-AMP and then transferred to the acceptor end of tRNA(Tyr). This Rickettsia rickettsii (strain Sheila Smith) protein is Tyrosine--tRNA ligase.